We begin with the raw amino-acid sequence, 181 residues long: uncharacterized protein (181 aa).

Residues 126 to 148 (SYKDKEEEEDEDPEEDDDDPRVQ) are disordered. The segment covering 131-144 (EEEEDEDPEEDDDD) has biased composition (acidic residues).

This sequence belongs to the chlamydial CPn_0422/CT_273/TC_0545 family.

This is an uncharacterized protein from Chlamydia pneumoniae (Chlamydophila pneumoniae).